Here is a 107-residue protein sequence, read N- to C-terminus: UPF0145 protein TT_C0892 (107 aa).

It belongs to the UPF0145 family.

The chain is UPF0145 protein TT_C0892 from Thermus thermophilus (strain ATCC BAA-163 / DSM 7039 / HB27).